Here is a 327-residue protein sequence, read N- to C-terminus: Xylosidase/arabinosidase 43A (327 aa).

The active-site Proton acceptor is the Asp12. Glu228 serves as the catalytic Proton donor.

The protein belongs to the glycosyl hydrolase 43 family.

It localises to the secreted. The enzyme catalyses Hydrolysis of (1-&gt;4)-beta-D-xylans, to remove successive D-xylose residues from the non-reducing termini.. It catalyses the reaction Hydrolysis of terminal non-reducing alpha-L-arabinofuranoside residues in alpha-L-arabinosides.. Its activity is regulated as follows. Activity is inhibited by Ag(+), Li(+), Pb(2+), Cu(2+), Cr(3+), Co(3+), Fe(3+), Ni(2+), Mg(2+), Zn(2+), EDTA and SDS; but not by Mn(2+), Ca(2+) and beta-mercaptoethanol. Bifunctional beta-xylosidase/alpha-L-arabinosidases with a low level of xylanase activity. Is most active on 4-nitrophenyl beta-D-xylopyranoside (pNPX) (defined as 100%), moderate on p-nitrophenyl-alpha-L-arabinofuranoside (pNPA) (23.7%), and weak on beechwood xylan (15.9%) and birchwood xylan (15.2%). Is able to attack xylooligosacchardies with degrees of polymerisation of 2-5, releasing the amounts of reducing sugars in the order of xylopentose &gt; xylotetraose &gt; xylotriose &gt; xylobiose, i.e. the rate of xylose released from xylooligosacchardies increased with the chain length. No activity is detected in the presence of carboxymethyl cellulose-sodium (CMC-Na), sugar beet arabinan, AZCL-arabinan (debranched), 4-nitrophenyl a-D - galactopyranoside, 2-nitrophenyl beta-D-galactopyranoside, and 4-nitrophenyl alpha-D-glucopyranoside. The sequence is that of Xylosidase/arabinosidase 43A from Humicola insolens (Soft-rot fungus).